A 282-amino-acid chain; its full sequence is Protein-export membrane protein SecF (282 aa).

Transmembrane regions (helical) follow at residues 16-36 (MVAL…FNTV), 126-146 (QAIW…FVAF), 148-168 (IFIP…ITAA), 169-189 (FMDV…LMLI), 221-241 (GIIM…VFSL), and 253-273 (VLII…AGLL).

Belongs to the SecD/SecF family. SecF subfamily. As to quaternary structure, part of the protein translocation apparatus. Forms a complex with SecD.

It localises to the cell membrane. In terms of biological role, involved in protein export. The sequence is that of Protein-export membrane protein SecF from Methanolacinia petrolearia (strain DSM 11571 / OCM 486 / SEBR 4847) (Methanoplanus petrolearius).